The sequence spans 603 residues: Insulin-like growth factor-binding protein complex acid labile subunit (603 aa).

The N-terminal stretch at M1–C23 is a signal peptide. The LRRNT domain maps to A32–V74. Disulfide bonds link C41-C47 and C45-C60. N64, N85, and N96 each carry an N-linked (GlcNAc...) asparagine glycan. 19 LRR repeats span residues S75–N96, S99–G120, N123–H144, S147–G168, H171–G192, N195–G216, E219–H240, R243–G264, A267–G288, G291–D312, F315–G336, Q339–G360, N363–G384, K387–G408, G411–G432, E435–G456, H459–P480, R483–S504, and R507–E528. The N-linked (GlcNAc...) asparagine glycan is linked to N368. An N-linked (GlcNAc...) asparagine glycan is attached at N515. Residues N535–C603 form the LRRCT domain. 3 disulfides stabilise this stretch: C539/C581, C541/C603, and C565/C570. N-linked (GlcNAc...) asparagine glycans are attached at residues N578 and N586.

As to quaternary structure, forms a ternary complex with IGF1 and IGFBP3. As to expression, brain, kidney, lung, heart, spleen, muscle and liver.

It localises to the secreted. The protein localises to the extracellular space. Its function is as follows. May have an important role in regulating the access of circulating IGFs to the tissues. In Rattus norvegicus (Rat), this protein is Insulin-like growth factor-binding protein complex acid labile subunit (Igfals).